Consider the following 1011-residue polypeptide: Translation initiation factor IF-2 (1011 aa).

The segment covering 49 to 77 (YIHEHGTEESPRRRSAGEDEFKPKIDLSK) has biased composition (basic and acidic residues). Disordered regions lie at residues 49–152 (YIHE…RFIT) and 187–407 (AAPA…LSLS). Over residues 93-104 (APPPPPPPPPRP) the composition is skewed to pro residues. The span at 105–115 (AVKAPSPVSQE) shows a compositional bias: low complexity. Over residues 116-126 (PRPPAVPPAPQ) the composition is skewed to pro residues. 2 stretches are compositionally biased toward low complexity: residues 187-212 (AAPA…KAPV) and 228-242 (TAKP…AATP). Pro residues-rich tracts occupy residues 243-252 (APTPGRPLPG) and 276-290 (SAPP…PPPQ). Over residues 316–329 (GPGGGSGGPGGFQR) the composition is skewed to gly residues. The span at 361–380 (LAPPGAPANKPAGRPAPARR) shows a compositional bias: low complexity. One can recognise a tr-type G domain in the interval 502-678 (VRPPVVTIMG…CLVADLGDLK (177 aa)). A G1 region spans residues 511–518 (GHVDHGKT). Residue 511–518 (GHVDHGKT) coordinates GTP. Residues 536–540 (GITQH) are G2. The interval 564–567 (DTPG) is G3. GTP-binding positions include 564-568 (DTPGH) and 618-621 (NKID). Residues 618–621 (NKID) form a G4 region. Residues 654-656 (SAK) are G5.

This sequence belongs to the TRAFAC class translation factor GTPase superfamily. Classic translation factor GTPase family. IF-2 subfamily.

It localises to the cytoplasm. Its function is as follows. One of the essential components for the initiation of protein synthesis. Protects formylmethionyl-tRNA from spontaneous hydrolysis and promotes its binding to the 30S ribosomal subunits. Also involved in the hydrolysis of GTP during the formation of the 70S ribosomal complex. The polypeptide is Translation initiation factor IF-2 (Koribacter versatilis (strain Ellin345)).